We begin with the raw amino-acid sequence, 764 residues long: MTIIHNLGFPRIGAQRELKRAVEAYWAGRQTAEALHETGRALRAAHWQRQADAGVAFVPVGDFAWYDHILEWTTLLGAVPARFGHPEGKPVDLDTLFRMGRGRAPSGKPAAACEMTKWFDTNYHYIVPELTPGQTFRVAREDLFEQVKEAQALGHRVKPVIPGPLTWLWLGKGDAFAQGAGDIGKLQLLDALLPVYGEVLERLAGLGVEWVQIDEPALVLDLPQAWRDAYQAVYAKLAASPVKLLLATYFDGLKDNLATALALPVAGLHVDLVRAPDQLSDVASGLRPGQVLSAGVINGRNIWRTDLDAALAMLAPVREQLQERLWLAPSCSLLHVPVDLAGETELDAELLGWLSFAVQKLDELCLLGKALGGDADPAVQQGLAAQRAALQARRQSPRIHNPAVAQRMAGQAGVSRERAPFGQRIARQQSELRLPAFPTTTIGSFPQTAEIRALRRDWKSGALTDSAYENAIRKEIEEVIRFQEKVGLDVLVHGEPERNDMVEYFGELLAGFAFTKNGWVQSYGSRCVKPPIIFGDVARPAPMTVGWSAYAQSLTDKPVKGMLTGPVTILQWSFVRDDQPREATCRQLALALRDEVVDLEAAGIRVIQIDEPAIREGLPLRRADWRAYLDWAVDCFRLSTAGVGEATQIHTHMCYSEFNDIIESIAAMDADVITIETSRSNMELLKAFEDFHYPNDIGPGVYDIHSPNVPEVDWMVELMRKAAARLPKERLWVNPDCGLKTRAWPETEAALIGMVQAARTLRAA.

Residues 16-19 (RELK) and K117 contribute to the 5-methyltetrahydropteroyltri-L-glutamate site. L-homocysteine is bound by residues 442-444 (IGS) and E495. L-methionine is bound by residues 442–444 (IGS) and E495. Residues 526 to 527 (RC) and W572 contribute to the 5-methyltetrahydropteroyltri-L-glutamate site. D610 provides a ligand contact to L-homocysteine. An L-methionine-binding site is contributed by D610. E616 contributes to the 5-methyltetrahydropteroyltri-L-glutamate binding site. The Zn(2+) site is built by H652, C654, and E676. H705 functions as the Proton donor in the catalytic mechanism. C737 is a binding site for Zn(2+).

Belongs to the vitamin-B12 independent methionine synthase family. It depends on Zn(2+) as a cofactor.

The enzyme catalyses 5-methyltetrahydropteroyltri-L-glutamate + L-homocysteine = tetrahydropteroyltri-L-glutamate + L-methionine. It functions in the pathway amino-acid biosynthesis; L-methionine biosynthesis via de novo pathway; L-methionine from L-homocysteine (MetE route): step 1/1. In terms of biological role, catalyzes the transfer of a methyl group from 5-methyltetrahydrofolate to homocysteine resulting in methionine formation. This is 5-methyltetrahydropteroyltriglutamate--homocysteine methyltransferase from Bordetella bronchiseptica (strain ATCC BAA-588 / NCTC 13252 / RB50) (Alcaligenes bronchisepticus).